Consider the following 147-residue polypeptide: uncharacterized protein (147 aa).

The tract at residues 51–72 (VTSSMSVMNDSEECPLINGPSM) is disordered.

This is an uncharacterized protein from Gallid herpesvirus 2 (strain GA) (GaHV-2).